The following is a 479-amino-acid chain: Ribosomal protein uS12 methylthiotransferase RimO (479 aa).

A disordered region spans residues 1 to 34 (MTVNTFDPSKASPVTHASDSASKTPEPNAVAAPS). Residues 15–25 (THASDSASKTP) show a composition bias toward polar residues. An MTTase N-terminal domain is found at 39 to 151 (NRVGFVSLGC…VMGAVHGYIP (113 aa)). [4Fe-4S] cluster-binding residues include Cys48, Cys84, Cys113, Cys184, Cys188, and Cys191. A Radical SAM core domain is found at 170–407 (LTPRHYAYLK…METQQAISAA (238 aa)). The TRAM domain maps to 410–476 (KQKVGYEMDV…DYDLTGIAVE (67 aa)).

The protein belongs to the methylthiotransferase family. RimO subfamily. The cofactor is [4Fe-4S] cluster.

Its subcellular location is the cytoplasm. The enzyme catalyses L-aspartate(89)-[ribosomal protein uS12]-hydrogen + (sulfur carrier)-SH + AH2 + 2 S-adenosyl-L-methionine = 3-methylsulfanyl-L-aspartate(89)-[ribosomal protein uS12]-hydrogen + (sulfur carrier)-H + 5'-deoxyadenosine + L-methionine + A + S-adenosyl-L-homocysteine + 2 H(+). Catalyzes the methylthiolation of an aspartic acid residue of ribosomal protein uS12. This is Ribosomal protein uS12 methylthiotransferase RimO from Saccharophagus degradans (strain 2-40 / ATCC 43961 / DSM 17024).